Consider the following 255-residue polypeptide: Postacrosomal sheath WW domain-binding protein (255 aa).

The 73-residue stretch at 15 to 87 (LIPNGESLLK…DLITNLTVEQ (73 aa)) folds into the GRAM domain. A run of 7 repeats spans residues 139-145 (YGAPPAG), 146-152 (YGAPPAG), 153-159 (YGAPPPG), 160-166 (YGAPPAG), 167-173 (YGAPPPG), 174-180 (YGAPPAG), and 202-208 (YGAPPLG). Positions 139–208 (YGAPPAGYGA…PAGYGAPPLG (70 aa)) are 6 X 7 AA tandem repeat of Y-G-X-P-P-X-G. Residues 171–174 (PPGY) carry the PPxY motif motif. Disordered stretches follow at residues 180–199 (GYGA…RASP) and 204–255 (APPL…ASSS).

Functionally, may play a role in meiotic resumption and pronuclear formation, mediated by a WW domain-signaling pathway during fertilization. This Macaca fascicularis (Crab-eating macaque) protein is Postacrosomal sheath WW domain-binding protein (WBP2NL).